A 227-amino-acid chain; its full sequence is PKHD-type hydroxylase M446_1130 (227 aa).

A Fe2OG dioxygenase domain is found at 78–178 (QIFPPLFNRY…RVASFFWLQS (101 aa)). Histidine 96, aspartate 98, and histidine 159 together coordinate Fe cation. Arginine 169 is a 2-oxoglutarate binding site.

Requires Fe(2+) as cofactor. L-ascorbate is required as a cofactor.

The polypeptide is PKHD-type hydroxylase M446_1130 (Methylobacterium sp. (strain 4-46)).